Reading from the N-terminus, the 203-residue chain is ATP-dependent Clp protease proteolytic subunit 2 (203 aa).

S101 (nucleophile) is an active-site residue. Residue H126 is part of the active site.

It belongs to the peptidase S14 family. Fourteen ClpP subunits assemble into 2 heptameric rings which stack back to back to give a disk-like structure with a central cavity, resembling the structure of eukaryotic proteasomes.

The protein resides in the cytoplasm. The enzyme catalyses Hydrolysis of proteins to small peptides in the presence of ATP and magnesium. alpha-casein is the usual test substrate. In the absence of ATP, only oligopeptides shorter than five residues are hydrolyzed (such as succinyl-Leu-Tyr-|-NHMec, and Leu-Tyr-Leu-|-Tyr-Trp, in which cleavage of the -Tyr-|-Leu- and -Tyr-|-Trp bonds also occurs).. In terms of biological role, cleaves peptides in various proteins in a process that requires ATP hydrolysis. Has a chymotrypsin-like activity. Plays a major role in the degradation of misfolded proteins. This Prochlorococcus marinus (strain MIT 9312) protein is ATP-dependent Clp protease proteolytic subunit 2.